Consider the following 255-residue polypeptide: Diphthine synthase (255 aa).

S-adenosyl-L-methionine contacts are provided by residues Leu9, Asp85, Val88, 113-114 (SI), Leu164, Ala207, and His232.

The protein belongs to the diphthine synthase family. As to quaternary structure, homodimer.

The catalysed reaction is 2-[(3S)-amino-3-carboxypropyl]-L-histidyl-[translation elongation factor 2] + 3 S-adenosyl-L-methionine = diphthine-[translation elongation factor 2] + 3 S-adenosyl-L-homocysteine + 3 H(+). It functions in the pathway protein modification; peptidyl-diphthamide biosynthesis. Its function is as follows. S-adenosyl-L-methionine-dependent methyltransferase that catalyzes the trimethylation of the amino group of the modified target histidine residue in translation elongation factor 2 (EF-2), to form an intermediate called diphthine. The three successive methylation reactions represent the second step of diphthamide biosynthesis. The sequence is that of Diphthine synthase from Methanococcus vannielii (strain ATCC 35089 / DSM 1224 / JCM 13029 / OCM 148 / SB).